Here is a 147-residue protein sequence, read N- to C-terminus: Transcriptional repressor NrdR (147 aa).

Residues 3 to 34 (CPYCGNVETTVVETRESDEGDAVRRRRRCSAC) fold into a zinc finger. The ATP-cone domain maps to 49-139 (PAVVKKNGDR…VYREFEDIDA (91 aa)).

The protein belongs to the NrdR family. Zn(2+) is required as a cofactor.

Its function is as follows. Negatively regulates transcription of bacterial ribonucleotide reductase nrd genes and operons by binding to NrdR-boxes. The protein is Transcriptional repressor NrdR of Leptothrix cholodnii (strain ATCC 51168 / LMG 8142 / SP-6) (Leptothrix discophora (strain SP-6)).